A 143-amino-acid chain; its full sequence is Small ribosomal subunit protein uS9 (143 aa).

At Ser2 the chain carries N-acetylserine. A disordered region spans residues 123–143; that stretch reads MPEPKKFGGKGARSRYQKSYR. Basic residues predominate over residues 134–143; sequence ARSRYQKSYR.

The protein belongs to the universal ribosomal protein uS9 family.

In Maudiozyma exigua (Yeast), this protein is Small ribosomal subunit protein uS9 (RPS16).